We begin with the raw amino-acid sequence, 868 residues long: DNA mismatch repair protein MutS (868 aa).

An ATP-binding site is contributed by 623–630 (GPNMAGKS).

It belongs to the DNA mismatch repair MutS family.

In terms of biological role, this protein is involved in the repair of mismatches in DNA. It is possible that it carries out the mismatch recognition step. This protein has a weak ATPase activity. This Magnetococcus marinus (strain ATCC BAA-1437 / JCM 17883 / MC-1) protein is DNA mismatch repair protein MutS.